The sequence spans 1059 residues: Pleckstrin homology domain-containing family M member 1 (1059 aa).

In terms of domain architecture, RUN spans 40-182; sequence TSEDGDANTM…LSFELSYKSA (143 aa). A Phosphoserine modification is found at serine 218. Disordered regions lie at residues 218-244, 272-334, and 354-411; these read SLDS…RRDR, LQEN…TPMF, and SEEP…DQGS. Polar residues-rich tracts occupy residues 313 to 334 and 392 to 401; these read SKAQ…TPMF and GSTSDQQPSS. Serine 430, serine 433, and serine 488 each carry phosphoserine. The PH 1 domain occupies 536–627; that stretch reads GLMKLGTVAR…WLDRVREALQ (92 aa). The LIR signature appears at 634–640; the sequence is EEEWVNI. Positions 657-1059 are interaction with RAB7A; the sequence is LPPYSALLPE…RKYQEQNTVS (403 aa). One can recognise a PH 2 domain in the interval 686 to 780; that stretch reads DAIKESLLYL…WRDLVRKVLA (95 aa). The Phorbol-ester/DAG-type zinc finger occupies 989 to 1043; the sequence is QHVYHCDLCTQRGFICQICHHQDIIFPFEFDTTVRCAECRTVFHQSCQAVVRKGC.

Interacts (via N- and C-terminus) with RAB7A (GTP-bound form). Simultaneously interacts with RAB7A and ARL8B; bringing about clustering and fusion of late endosomes and lysosomes. Interacts (via RUN domain) with ARL8B (GTP-bound form); the interaction is required for PLEKHM1 localization to lysosomes and for ARL8B function in delivery and degradation of endocytic and autophagic cargo in lysosomes. PLEKHM1 and PLEKHM2 compete for interaction with ARL8B. Interacts with ARL8A; the interaction is weaker than with ARL8B. Interacts with VPS41, VPS11, VPS18, VPS33A and VPS39; indicative for an association with the HOPS complex; the interactions with, at least, VPS41, VPS11, VPS18 and VPS33A require ARL8B. Interacts with GABARAP, GABARAPL, GABARAPL2, MAP1LC3A, MAP1LC3B and MAP1LC3C. Interacts with PAFAH1B. Interacts (via N- and C-terminus) with NDEL1. Interacts (via C-terminus) with MAP3K7. Interacts (via N- and C-terminus) with FAM98A. Interacts (via C-terminus) with DEF8; this interaction is weak but increased in a RAB7A-dependent manner. May interact with sialyl-lex-positive protein. In terms of tissue distribution, expressed in testis, skeletal muscle, lung, liver, spleen, brain, heart, kidney and bone. Weakly expressed in monocytes (at protein level).

It localises to the autolysosome membrane. Its subcellular location is the endosome membrane. It is found in the late endosome membrane. The protein resides in the lysosome membrane. Its function is as follows. Acts as a multivalent adapter protein that regulates Rab7-dependent and HOPS complex-dependent fusion events in the endolysosomal system and couples autophagic and the endocytic trafficking pathways. Acts as a dual effector of RAB7A and ARL8B that simultaneously binds these GTPases, bringing about clustering and fusion of late endosomes and lysosomes. Required for late stages of endolysosomal maturation, facilitating both endocytosis-mediated degradation of growth factor receptors and autophagosome clearance. Interaction with Arl8b is a crucial factor in the terminal maturation of autophagosomes and to mediate autophagosome-lysosome fusion. Positively regulates lysosome peripheral distribution and ruffled border formation in osteoclasts. May be involved in negative regulation of endocytic transport from early endosome to late endosome/lysosome implicating its association with Rab7. May have a role in sialyl-lex-mediated transduction of apoptotic signals. Involved in bone resorption. In Rattus norvegicus (Rat), this protein is Pleckstrin homology domain-containing family M member 1.